The following is a 637-amino-acid chain: tRNA uridine 5-carboxymethylaminomethyl modification enzyme MnmG (637 aa).

14-19 contributes to the FAD binding site; sequence GAGHAG. 279–293 contacts NAD(+); sequence GPRYCPSIEDKVVRF.

This sequence belongs to the MnmG family. Homodimer. Heterotetramer of two MnmE and two MnmG subunits. It depends on FAD as a cofactor.

It localises to the cytoplasm. Its function is as follows. NAD-binding protein involved in the addition of a carboxymethylaminomethyl (cmnm) group at the wobble position (U34) of certain tRNAs, forming tRNA-cmnm(5)s(2)U34. The polypeptide is tRNA uridine 5-carboxymethylaminomethyl modification enzyme MnmG (Desulfitobacterium hafniense (strain DSM 10664 / DCB-2)).